The primary structure comprises 456 residues: MKKYDRGWASLETGAALLIVMLLIAWGAGIWQDYIQTKGWQTEARLVSNWTSAARSYIGKNYTTLQGSSTTTTPAVITTTMLKNTGFLSSGFTETNSEGQRLQAYVVRNAQNPELLQAMVVSSGGTPYPVKALIQMAKDITTGLGGYIQDGKTATGALRSWSVALSNYGAKSGNGHIAVLLSTDELSGAAEDTDRLYRFQVNGRPDLNKMHTAIDMGSNNLNNVGAVNAQTGNFSGNVNGVNGTFSGQVKGNSGNFDVNVTAGGDIRSNNGWLITRNSKGWLNETHGGGFYMSDGSWVRSVNNKGIYTGGQVKGGTVRADGRLYTGEYLQLERTAVAGASCSPNGLVGRDNTGAILSCQSGTWRKSNSGSTVITGRIANGQQIPLPTGFSASQCSWSVSNAENPQGWKPNYFAGSVATYDANRIVKCGFYDEYNFHKGTFRADLTGKCSYVVACQN.

Residues 1–361 (MKKYDRGWAS…TGAILSCQSG (361 aa)) are constant region. Residues 362-456 (TWRKSNSGST…KCSYVVACQN (95 aa)) are variable region.

This Escherichia coli protein is Shufflon protein D'.